The sequence spans 126 residues: UPF0102 protein BH12350 (126 aa).

The protein belongs to the UPF0102 family.

This chain is UPF0102 protein BH12350, found in Bartonella henselae (strain ATCC 49882 / DSM 28221 / CCUG 30454 / Houston 1) (Rochalimaea henselae).